The sequence spans 144 residues: 3-hydroxyacyl-[acyl-carrier-protein] dehydratase FabZ (144 aa).

Residue histidine 51 is part of the active site.

The protein belongs to the thioester dehydratase family. FabZ subfamily.

The protein localises to the cytoplasm. It carries out the reaction a (3R)-hydroxyacyl-[ACP] = a (2E)-enoyl-[ACP] + H2O. Functionally, involved in unsaturated fatty acids biosynthesis. Catalyzes the dehydration of short chain beta-hydroxyacyl-ACPs and long chain saturated and unsaturated beta-hydroxyacyl-ACPs. In Lactococcus lactis subsp. lactis (strain IL1403) (Streptococcus lactis), this protein is 3-hydroxyacyl-[acyl-carrier-protein] dehydratase FabZ (fabZ2).